The sequence spans 471 residues: Alpha-galactosidase 2 (471 aa).

The first 18 residues, 1 to 18 (MFAFYFLTACISLKGVFG), serve as a signal peptide directing secretion. C42 and C74 form a disulfide bridge. Substrate contacts are provided by D72 and D73. Residue N105 is glycosylated (N-linked (GlcNAc...) asparagine). C121 and C151 form a disulfide bridge. K147 is a binding site for substrate. Catalysis depends on D149, which acts as the Nucleophile. An N-linked (GlcNAc...) asparagine glycan is attached at N175. Residue R205 participates in substrate binding. The Proton donor role is filled by D209. Intrachain disulfides connect C221/C237 and C223/C230. Q251 lines the substrate pocket. N270, N370, N403, N413, N422, N435, and N454 each carry an N-linked (GlcNAc...) asparagine glycan.

Belongs to the glycosyl hydrolase 27 family. Homotetramer.

The protein localises to the secreted. The enzyme catalyses Hydrolysis of terminal, non-reducing alpha-D-galactose residues in alpha-D-galactosides, including galactose oligosaccharides, galactomannans and galactolipids.. The sequence is that of Alpha-galactosidase 2 (MEL2) from Saccharomyces cerevisiae (Baker's yeast).